The sequence spans 124 residues: Small ribosomal subunit protein uS12 (124 aa).

Asp89 carries the post-translational modification 3-methylthioaspartic acid.

It belongs to the universal ribosomal protein uS12 family. Part of the 30S ribosomal subunit. Contacts proteins S8 and S17. May interact with IF1 in the 30S initiation complex.

With S4 and S5 plays an important role in translational accuracy. In terms of biological role, interacts with and stabilizes bases of the 16S rRNA that are involved in tRNA selection in the A site and with the mRNA backbone. Located at the interface of the 30S and 50S subunits, it traverses the body of the 30S subunit contacting proteins on the other side and probably holding the rRNA structure together. The combined cluster of proteins S8, S12 and S17 appears to hold together the shoulder and platform of the 30S subunit. In Acinetobacter baumannii (strain AB307-0294), this protein is Small ribosomal subunit protein uS12.